A 417-amino-acid chain; its full sequence is Gamma-glutamyl phosphate reductase (417 aa).

The protein belongs to the gamma-glutamyl phosphate reductase family.

The protein resides in the cytoplasm. The enzyme catalyses L-glutamate 5-semialdehyde + phosphate + NADP(+) = L-glutamyl 5-phosphate + NADPH + H(+). Its pathway is amino-acid biosynthesis; L-proline biosynthesis; L-glutamate 5-semialdehyde from L-glutamate: step 2/2. Its function is as follows. Catalyzes the NADPH-dependent reduction of L-glutamate 5-phosphate into L-glutamate 5-semialdehyde and phosphate. The product spontaneously undergoes cyclization to form 1-pyrroline-5-carboxylate. The sequence is that of Gamma-glutamyl phosphate reductase from Cronobacter sakazakii (strain ATCC BAA-894) (Enterobacter sakazakii).